The following is a 784-amino-acid chain: Repetin (784 aa).

Positions 1-91 are S-100-like; the sequence is MAQLLNSILS…VQACYHKLDN (91 aa). EF-hand domains are found at residues 13–48 and 49–84; these read DVFH…LQRP and NDPE…LVQA. Residues E32, D62, D64, D66, H68, and E73 each contribute to the Ca(2+) site. 4 disordered regions span residues 92-221, 282-584, 601-661, and 677-784; these read KSHG…QAKW, GCGQ…SHYI, TEGT…HQHK, and RDWQ…NHQR. The segment covering 124–201 has biased composition (basic and acidic residues); sequence RHEEERQNSH…FSFDQSERQS (78 aa). 7 stretches are compositionally biased toward polar residues: residues 286–296, 304–343, 356–392, 400–486, 504–584, 610–646, and 680–695; these read TDRQGQSSHYG, SYHY…SSHY, DQTN…SHYG, SSHY…QSSH, GQGQ…SHYI, VEQS…QNGH, and QSCS…QTRQ. Composition is skewed to basic and acidic residues over residues 704 to 722 and 729 to 784; these read WAEE…HESQ and QDRR…NHQR.

The protein belongs to the S100-fused protein family. Post-translationally, potential substrate of transglutaminase. Some arginines are probably converted to citrullines by peptidylarginine deimidase. Expression is scattered in the normal epidermis but strong in the acrosyringium, the inner hair root sheath and in the filiform papilli of the tongue.

It localises to the secreted. Its subcellular location is the extracellular space. The protein resides in the extracellular matrix. Involved in the cornified cell envelope formation. Multifunctional epidermal matrix protein. Reversibly binds calcium. In Homo sapiens (Human), this protein is Repetin (RPTN).